We begin with the raw amino-acid sequence, 307 residues long: Fructose-bisphosphate aldolase (307 aa).

Residue Ser49 participates in D-glyceraldehyde 3-phosphate binding. The Proton donor role is filled by Asp82. The Zn(2+) site is built by His83, Asp104, Glu134, and His180. Gly181 provides a ligand contact to dihydroxyacetone phosphate. A Zn(2+)-binding site is contributed by His210. Dihydroxyacetone phosphate is bound by residues 211–213 and 253–256; these read GAS and NTDT.

Belongs to the class II fructose-bisphosphate aldolase family. In terms of assembly, homodimer. Zn(2+) serves as cofactor.

It catalyses the reaction beta-D-fructose 1,6-bisphosphate = D-glyceraldehyde 3-phosphate + dihydroxyacetone phosphate. It functions in the pathway carbohydrate degradation; glycolysis; D-glyceraldehyde 3-phosphate and glycerone phosphate from D-glucose: step 4/4. Its function is as follows. Catalyzes the aldol condensation of dihydroxyacetone phosphate (DHAP or glycerone-phosphate) with glyceraldehyde 3-phosphate (G3P) to form fructose 1,6-bisphosphate (FBP) in gluconeogenesis and the reverse reaction in glycolysis. The chain is Fructose-bisphosphate aldolase (fba) from Helicobacter pylori (strain ATCC 700392 / 26695) (Campylobacter pylori).